We begin with the raw amino-acid sequence, 446 residues long: tRNA modification GTPase MnmE (446 aa).

3 residues coordinate (6S)-5-formyl-5,6,7,8-tetrahydrofolate: Arg24, Glu81, and Lys120. One can recognise a TrmE-type G domain in the interval 216-368 (GLHAVLIGPP…LHIRLRELAL (153 aa)). Asn226 is a binding site for K(+). GTP contacts are provided by residues 226-231 (NAGKSS), 245-251 (TDVAGTT), and 270-273 (DTAG). Position 230 (Ser230) interacts with Mg(2+). The K(+) site is built by Thr245, Val247, and Thr250. Thr251 provides a ligand contact to Mg(2+). Lys446 is a binding site for (6S)-5-formyl-5,6,7,8-tetrahydrofolate.

It belongs to the TRAFAC class TrmE-Era-EngA-EngB-Septin-like GTPase superfamily. TrmE GTPase family. Homodimer. Heterotetramer of two MnmE and two MnmG subunits. The cofactor is K(+).

The protein localises to the cytoplasm. In terms of biological role, exhibits a very high intrinsic GTPase hydrolysis rate. Involved in the addition of a carboxymethylaminomethyl (cmnm) group at the wobble position (U34) of certain tRNAs, forming tRNA-cmnm(5)s(2)U34. This Xanthomonas oryzae pv. oryzae (strain KACC10331 / KXO85) protein is tRNA modification GTPase MnmE.